A 527-amino-acid chain; its full sequence is Probable malate:quinone oxidoreductase (527 aa).

It belongs to the MQO family. It depends on FAD as a cofactor.

The enzyme catalyses (S)-malate + a quinone = a quinol + oxaloacetate. It participates in carbohydrate metabolism; tricarboxylic acid cycle; oxaloacetate from (S)-malate (quinone route): step 1/1. In Pectobacterium atrosepticum (strain SCRI 1043 / ATCC BAA-672) (Erwinia carotovora subsp. atroseptica), this protein is Probable malate:quinone oxidoreductase.